The sequence spans 173 residues: Fimbrial protein PrsE (173 aa).

Positions 1–24 (MKKIRGLCLPVMLGAVLMSQHVHA) are cleaved as a signal peptide.

Its subcellular location is the secreted. It localises to the fimbrium. Fimbriae (also called pili), polar filaments radiating from the surface of the bacterium to a length of 0.5-1.5 micrometers and numbering 100-300 per cell, enable bacteria to colonize the epithelium of specific host organs. The sequence is that of Fimbrial protein PrsE (prsE) from Escherichia coli.